The following is a 396-amino-acid chain: Acetyl-CoA acetyltransferase (396 aa).

Cysteine 88 (acyl-thioester intermediate) is an active-site residue. Residues histidine 352 and cysteine 382 each act as proton acceptor in the active site.

This sequence belongs to the thiolase-like superfamily. Thiolase family. Homotetramer.

It carries out the reaction 2 acetyl-CoA = acetoacetyl-CoA + CoA. It participates in biopolymer metabolism; poly-(R)-3-hydroxybutanoate biosynthesis. When expressed in E.coli with Synechocystis PhaB, PhaC and PhaE confers the ability to synthesize up to 12% (w/w) poly(3-hydroxybutyrate) (PHB) depending on the carbon source. This chain is Acetyl-CoA acetyltransferase, found in Synechocystis sp. (strain ATCC 27184 / PCC 6803 / Kazusa).